A 687-amino-acid polypeptide reads, in one-letter code: TWiK family of potassium channels protein 12 (687 aa).

Residues Met1 to Lys21 are Cytoplasmic-facing. Residues Phe22 to Gln42 form a helical membrane-spanning segment. 3 N-linked (GlcNAc...) asparagine glycosylation sites follow: Asn53, Asn77, and Asn98. The pore-forming intramembrane region spans Trp112–Tyr132. Residues Ile142–Ile162 traverse the membrane as a helical segment. Over Gly163–Pro212 the chain is Cytoplasmic. A helical membrane pass occupies residues Phe213–Phe233. The segment at residues Phe242 to Leu262 is an intramembrane region (pore-forming). A helical membrane pass occupies residues Val270–Ile290. The Cytoplasmic segment spans residues Thr291–Val687. The tract at residues Ser661–Val687 is disordered. Basic and acidic residues predominate over residues Leu677 to Val687.

This sequence belongs to the two pore domain potassium channel (TC 1.A.1.8) family.

The protein localises to the membrane. This Caenorhabditis briggsae protein is TWiK family of potassium channels protein 12.